The chain runs to 125 residues: Small ribosomal subunit protein eS8 (125 aa).

Belongs to the eukaryotic ribosomal protein eS8 family. Part of the 30S ribosomal subunit.

The polypeptide is Small ribosomal subunit protein eS8 (Methanosphaerula palustris (strain ATCC BAA-1556 / DSM 19958 / E1-9c)).